Here is a 103-residue protein sequence, read N- to C-terminus: Nucleoid-associated protein SUN_2278 (103 aa).

This sequence belongs to the YbaB/EbfC family. As to quaternary structure, homodimer.

The protein resides in the cytoplasm. It localises to the nucleoid. Binds to DNA and alters its conformation. May be involved in regulation of gene expression, nucleoid organization and DNA protection. The chain is Nucleoid-associated protein SUN_2278 from Sulfurovum sp. (strain NBC37-1).